A 235-amino-acid polypeptide reads, in one-letter code: Small ribosomal subunit protein uS2c (235 aa).

The protein belongs to the universal ribosomal protein uS2 family.

It localises to the plastid. The sequence is that of Small ribosomal subunit protein uS2c (rps2) from Euglena longa (Euglenophycean alga).